A 191-amino-acid polypeptide reads, in one-letter code: MKKELLEWIISIAVAFVILFIVGKFIVTPYTIKGESMDPTLKDGERVAVNIIGYKTGGLEKGNVVVFHANKNDDYVKRVIGVPGDKVEYKNDTLYVNGKKQDEPYLNYNLKHKQGDYITGTFQVKDLPNANPKSNVIPKGKYLVLGDNREVSKDSRAFGLIDEDQIVGKVSFRFWPFSEFKYNFNPENTKN.

The Cytoplasmic portion of the chain corresponds to M1–E7. The helical transmembrane segment at W8 to T28 threads the bilayer. At P29–N191 the chain is on the extracellular side. Residues S36 and K77 contribute to the active site.

It belongs to the peptidase S26 family.

Its subcellular location is the cell membrane. It catalyses the reaction Cleavage of hydrophobic, N-terminal signal or leader sequences from secreted and periplasmic proteins.. In terms of biological role, essential for cell viability. This chain is Signal peptidase IB (spsB), found in Staphylococcus aureus (strain MRSA252).